A 98-amino-acid chain; its full sequence is MASTNFRPLHDRVVVRRVESEEKTKGGIIIPDTAKEKPQEGEIVAVGSGARDESGKVVPLDVKAGDRILFGKWSGTEVKINGEDLLIMKEADIMGVIG.

This sequence belongs to the GroES chaperonin family. As to quaternary structure, heptamer of 7 subunits arranged in a ring. Interacts with the chaperonin GroEL.

It localises to the cytoplasm. In terms of biological role, together with the chaperonin GroEL, plays an essential role in assisting protein folding. The GroEL-GroES system forms a nano-cage that allows encapsulation of the non-native substrate proteins and provides a physical environment optimized to promote and accelerate protein folding. GroES binds to the apical surface of the GroEL ring, thereby capping the opening of the GroEL channel. This chain is Co-chaperonin GroES 1, found in Rhizobium meliloti (strain 1021) (Ensifer meliloti).